Reading from the N-terminus, the 115-residue chain is Large ribosomal subunit protein bL20 (115 aa).

This sequence belongs to the bacterial ribosomal protein bL20 family.

Binds directly to 23S ribosomal RNA and is necessary for the in vitro assembly process of the 50S ribosomal subunit. It is not involved in the protein synthesizing functions of that subunit. This Chlorobaculum tepidum (strain ATCC 49652 / DSM 12025 / NBRC 103806 / TLS) (Chlorobium tepidum) protein is Large ribosomal subunit protein bL20.